A 205-amino-acid polypeptide reads, in one-letter code: Holliday junction branch migration complex subunit RuvA (205 aa).

Residues 1-64 (MIAHLRGELV…EDALTLYGFL (64 aa)) are domain I. Residues 65–143 (TQAEYDLFEL…AVPAGGGGVP (79 aa)) form a domain II region. The segment at 144–153 (DGLPVAVAPA) is flexible linker. Residues 153-205 (AGDAWAEASEALIALGYSRGEAAAALARVRAEAGEAPSVETLVRLALKQLYRG) are domain III.

The protein belongs to the RuvA family. Homotetramer. Forms an RuvA(8)-RuvB(12)-Holliday junction (HJ) complex. HJ DNA is sandwiched between 2 RuvA tetramers; dsDNA enters through RuvA and exits via RuvB. An RuvB hexamer assembles on each DNA strand where it exits the tetramer. Each RuvB hexamer is contacted by two RuvA subunits (via domain III) on 2 adjacent RuvB subunits; this complex drives branch migration. In the full resolvosome a probable DNA-RuvA(4)-RuvB(12)-RuvC(2) complex forms which resolves the HJ.

It is found in the cytoplasm. In terms of biological role, the RuvA-RuvB-RuvC complex processes Holliday junction (HJ) DNA during genetic recombination and DNA repair, while the RuvA-RuvB complex plays an important role in the rescue of blocked DNA replication forks via replication fork reversal (RFR). RuvA specifically binds to HJ cruciform DNA, conferring on it an open structure. The RuvB hexamer acts as an ATP-dependent pump, pulling dsDNA into and through the RuvAB complex. HJ branch migration allows RuvC to scan DNA until it finds its consensus sequence, where it cleaves and resolves the cruciform DNA. The sequence is that of Holliday junction branch migration complex subunit RuvA from Symbiobacterium thermophilum (strain DSM 24528 / JCM 14929 / IAM 14863 / T).